A 342-amino-acid chain; its full sequence is 4-hydroxy-2-oxovalerate aldolase 2 (342 aa).

One can recognise a Pyruvate carboxyltransferase domain in the interval 8–260; that stretch reads ITVHDMTLRD…ETGVDVFKIQ (253 aa). Residue 16-17 coordinates substrate; the sequence is RD. D17 serves as a coordination point for Mn(2+). H20 (proton acceptor) is an active-site residue. S170 and H199 together coordinate substrate. Positions 199 and 201 each coordinate Mn(2+). Y290 contributes to the substrate binding site.

The protein belongs to the 4-hydroxy-2-oxovalerate aldolase family.

The catalysed reaction is (S)-4-hydroxy-2-oxopentanoate = acetaldehyde + pyruvate. The chain is 4-hydroxy-2-oxovalerate aldolase 2 (mhpE) from Azoarcus sp. (strain BH72).